The chain runs to 91 residues: Small ribosomal subunit protein bS16 (91 aa).

The protein belongs to the bacterial ribosomal protein bS16 family.

In Ligilactobacillus salivarius (strain UCC118) (Lactobacillus salivarius), this protein is Small ribosomal subunit protein bS16.